Reading from the N-terminus, the 352-residue chain is S-adenosylmethionine:tRNA ribosyltransferase-isomerase (352 aa).

The protein belongs to the QueA family. As to quaternary structure, monomer.

It localises to the cytoplasm. It carries out the reaction 7-aminomethyl-7-carbaguanosine(34) in tRNA + S-adenosyl-L-methionine = epoxyqueuosine(34) in tRNA + adenine + L-methionine + 2 H(+). Its pathway is tRNA modification; tRNA-queuosine biosynthesis. Functionally, transfers and isomerizes the ribose moiety from AdoMet to the 7-aminomethyl group of 7-deazaguanine (preQ1-tRNA) to give epoxyqueuosine (oQ-tRNA). The sequence is that of S-adenosylmethionine:tRNA ribosyltransferase-isomerase from Dechloromonas aromatica (strain RCB).